A 559-amino-acid chain; its full sequence is MMMQKLRRSGEFIRFGCKSLISSRPNKDSVSRSVSGFVNHYKSKGKLFELSDGNYKTELHHPCISRNVGMLLQQYKCFGSSAASLIQRNPLFSSLDSKDVSYFKEILGEKNVVEDKERLETANTDWMHKYKGSSKLMLLPKNTQEVSQILEYCDSRRLAVVPQGGNTGLVGGSVPVFDEVIVNVGLMNKILSFDEVSGVLVCEAGCILENLATFLDTKGFIMPLDLGAKGSCHIGGNVSTNAGGLRLIRYGSLHGTVLGLEAVTANGNVLDMLGTLRKDNTGYDLKHLFIGSEGSLGIVTKVSILTQPKLSSVNLAFIACKDYLSCQKLLVEAKRNLGEILSAFEFLDNNSMDLVLNHLDGVRNPVSSSENFYILIETTGSDETNDREKLEAFLLKSLEKGLVSDGVIAQDINQASSFWRIREGITEALQKAGAVYKYDLSLPVEEIYNIVNDLRGRLGDLANVMGYGHLGDGNLHLNISAAEYNDKLLGLIEPYVYEWTSKHRGSISAEHGLGVMKANEIFYSKSPETVALMASIKKLLDPKGILNPYKVLPHSLFSN.

The N-terminal 78 residues, 1–78 (MMMQKLRRSG…GMLLQQYKCF (78 aa)), are a transit peptide targeting the mitochondrion. The FAD-binding PCMH-type domain maps to 130 to 309 (YKGSSKLMLL…TKVSILTQPK (180 aa)).

It belongs to the FAD-binding oxidoreductase/transferase type 4 family. In terms of assembly, homodimer. FAD serves as cofactor.

It is found in the mitochondrion. The enzyme catalyses (R)-2-hydroxyglutarate + A = 2-oxoglutarate + AH2. In terms of biological role, catalyzes the oxidation of (R)-2-hydroxyglutarate to 2-oxoglutarate. May be involved in the catabolism of propionyl-CoA derived from beta-oxidation. Involved in degradation of lysine for the supply of carbon and electrons to the ETF/ETFQO complex during dark-induced sugar starvation. The polypeptide is D-2-hydroxyglutarate dehydrogenase, mitochondrial (D2HGDH) (Arabidopsis thaliana (Mouse-ear cress)).